The sequence spans 180 residues: Endogenous alpha-amylase/subtilisin inhibitor (180 aa).

Intrachain disulfides connect Cys-42–Cys-89 and Cys-143–Cys-147.

It belongs to the protease inhibitor I3 (leguminous Kunitz-type inhibitor) family.

Its function is as follows. Inhibitor of endogenous alpha-amylase (wheat also produces an exogenous inhibitor which inactivates alpha-amylase from animal and insect origin). This inhibitor can also inhibit subtilisin. This Triticum aestivum (Wheat) protein is Endogenous alpha-amylase/subtilisin inhibitor.